Consider the following 353-residue polypeptide: MSDAYLALETGDVVEATARAPGMARGELVFTTAYTGYEESLTDPSYEAQVLTFAYPLIGNYGVRPERTESDRVHPSAVVARELTDDVADWLRTEGVPAVDGIDTRDLVLDIRDGGAMQVGIAAGPDASPATARAQLADCPRLSARTEIGAHVSVDTAETHGNGDTTVALVDCGAKRSIIDAFVARGATVHRLPYDATPADIAAVDPDLLFISNGPGDPANFDAAEHLVDEYIGTVPIAGICLGQQIVARALGGDTEKMDFGHRGVNQPVLDHDSGRVVMTTQNHGYTVADPGDLTVTQVNVNDGTPEALDSAPLDVLTRQYHPEANPGPHDTRGFFDDVLAMADASYTPATAD.

Residues 1-166 (MSDAYLALET…AETHGNGDTT (166 aa)) form a CPSase region. The L-glutamine site is built by serine 45, glycine 214, and glycine 216. The region spanning 166–349 (TVALVDCGAK…LAMADASYTP (184 aa)) is the Glutamine amidotransferase type-1 domain. The active-site Nucleophile is the cysteine 241. L-glutamine-binding residues include leucine 242, glutamine 245, asparagine 283, glycine 285, and tyrosine 286. Catalysis depends on residues histidine 322 and glutamate 324.

This sequence belongs to the CarA family. Composed of two chains; the small (or glutamine) chain promotes the hydrolysis of glutamine to ammonia, which is used by the large (or ammonia) chain to synthesize carbamoyl phosphate. Tetramer of heterodimers (alpha,beta)4.

It carries out the reaction hydrogencarbonate + L-glutamine + 2 ATP + H2O = carbamoyl phosphate + L-glutamate + 2 ADP + phosphate + 2 H(+). The catalysed reaction is L-glutamine + H2O = L-glutamate + NH4(+). The protein operates within amino-acid biosynthesis; L-arginine biosynthesis; carbamoyl phosphate from bicarbonate: step 1/1. It participates in pyrimidine metabolism; UMP biosynthesis via de novo pathway; (S)-dihydroorotate from bicarbonate: step 1/3. Small subunit of the glutamine-dependent carbamoyl phosphate synthetase (CPSase). CPSase catalyzes the formation of carbamoyl phosphate from the ammonia moiety of glutamine, carbonate, and phosphate donated by ATP, constituting the first step of 2 biosynthetic pathways, one leading to arginine and/or urea and the other to pyrimidine nucleotides. The small subunit (glutamine amidotransferase) binds and cleaves glutamine to supply the large subunit with the substrate ammonia. The sequence is that of Carbamoyl phosphate synthase small chain from Halobacterium salinarum (strain ATCC 29341 / DSM 671 / R1).